A 92-amino-acid chain; its full sequence is Small ribosomal subunit protein uS19c (92 aa).

The protein belongs to the universal ribosomal protein uS19 family.

It is found in the plastid. It localises to the chloroplast. Protein S19 forms a complex with S13 that binds strongly to the 16S ribosomal RNA. This is Small ribosomal subunit protein uS19c from Lactuca sativa (Garden lettuce).